Reading from the N-terminus, the 118-residue chain is Large ribosomal subunit protein uL22 (118 aa).

The protein belongs to the universal ribosomal protein uL22 family. In terms of assembly, part of the 50S ribosomal subunit.

Functionally, this protein binds specifically to 23S rRNA; its binding is stimulated by other ribosomal proteins, e.g. L4, L17, and L20. It is important during the early stages of 50S assembly. It makes multiple contacts with different domains of the 23S rRNA in the assembled 50S subunit and ribosome. Its function is as follows. The globular domain of the protein is located near the polypeptide exit tunnel on the outside of the subunit, while an extended beta-hairpin is found that lines the wall of the exit tunnel in the center of the 70S ribosome. This is Large ribosomal subunit protein uL22 from Levilactobacillus brevis (strain ATCC 367 / BCRC 12310 / CIP 105137 / JCM 1170 / LMG 11437 / NCIMB 947 / NCTC 947) (Lactobacillus brevis).